The chain runs to 261 residues: tRNA U34 carboxymethyltransferase (261 aa).

Carboxy-S-adenosyl-L-methionine-binding positions include Lys-25, Trp-39, Lys-44, Gly-63, 114–115 (VE), Tyr-135, and Arg-250.

Belongs to the class I-like SAM-binding methyltransferase superfamily. CmoB family. In terms of assembly, homotetramer.

The enzyme catalyses carboxy-S-adenosyl-L-methionine + 5-hydroxyuridine(34) in tRNA = 5-carboxymethoxyuridine(34) in tRNA + S-adenosyl-L-homocysteine + H(+). In terms of biological role, catalyzes carboxymethyl transfer from carboxy-S-adenosyl-L-methionine (Cx-SAM) to 5-hydroxyuridine (ho5U) to form 5-carboxymethoxyuridine (cmo5U) at position 34 in tRNAs. The sequence is that of tRNA U34 carboxymethyltransferase from Helicobacter pylori (strain J99 / ATCC 700824) (Campylobacter pylori J99).